Consider the following 872-residue polypeptide: Eukaryotic translation initiation factor 3 subunit C (872 aa).

The interval 1–100 (MSRFFRGGDD…KVKSAKDKRF (100 aa)) is disordered. 2 stretches are compositionally biased toward acidic residues: residues 16-59 (SSEE…DEEE) and 72-87 (SDDE…SDDE). The segment covering 88 to 100 (ATTKVKSAKDKRF) has biased composition (basic and acidic residues). The PCI domain maps to 613 to 787 (FHMHINLELL…ETVIFRKGVE (175 aa)). Residues 812–872 (TLEQKTQGSA…GGALGNAVRG (61 aa)) are disordered. Residues 831–848 (GGGQRGGGQRGGRGGART) show a composition bias toward gly residues.

The protein belongs to the eIF-3 subunit C family. As to quaternary structure, component of the eukaryotic translation initiation factor 3 (eIF-3) complex.

Its subcellular location is the cytoplasm. In terms of biological role, component of the eukaryotic translation initiation factor 3 (eIF-3) complex, which is involved in protein synthesis of a specialized repertoire of mRNAs and, together with other initiation factors, stimulates binding of mRNA and methionyl-tRNAi to the 40S ribosome. The eIF-3 complex specifically targets and initiates translation of a subset of mRNAs involved in cell proliferation. This Neurospora crassa (strain ATCC 24698 / 74-OR23-1A / CBS 708.71 / DSM 1257 / FGSC 987) protein is Eukaryotic translation initiation factor 3 subunit C (nip-1).